Reading from the N-terminus, the 399-residue chain is Acetate kinase 2 (399 aa).

Asn10 is a binding site for Mg(2+). Lys17 contributes to the ATP binding site. Arg89 contacts substrate. Asp146 functions as the Proton donor/acceptor in the catalytic mechanism. Residues 206–210 (HLGNG), 281–283 (DCR), and 329–333 (GIGEN) contribute to the ATP site. Position 384 (Glu384) interacts with Mg(2+).

Belongs to the acetokinase family. In terms of assembly, homodimer. It depends on Mg(2+) as a cofactor. The cofactor is Mn(2+).

The protein resides in the cytoplasm. It catalyses the reaction acetate + ATP = acetyl phosphate + ADP. It participates in metabolic intermediate biosynthesis; acetyl-CoA biosynthesis; acetyl-CoA from acetate: step 1/2. In terms of biological role, catalyzes the formation of acetyl phosphate from acetate and ATP. Can also catalyze the reverse reaction. This Neisseria meningitidis serogroup B (strain ATCC BAA-335 / MC58) protein is Acetate kinase 2.